Here is a 460-residue protein sequence, read N- to C-terminus: G-protein coupled receptor 22 (460 aa).

The Cytoplasmic segment spans residues 1–74 (MESMPSSLTH…YPVSFQVSLT (74 aa)). Residues 75–95 (GFLMLEIVLGLSSNLTVLALY) form a helical membrane-spanning segment. The Extracellular portion of the chain corresponds to 96–114 (CMKSNLVSSVSNIVTMNLH). The chain crosses the membrane as a helical span at residues 115-135 (VLDVLVCVGCIPLTIVVVLLP). Residues 136–144 (LEGNNALIC) are Cytoplasmic-facing. A helical transmembrane segment spans residues 145 to 165 (CFHEACVSFASVATAANVLAI). Over 166-185 (TLDRYDISVRPANRVLTMGR) the chain is Extracellular. A helical membrane pass occupies residues 186 to 206 (AVALLGSIWALSFFSFLVPFI). Residues 207–235 (EEGFFSQAGNERNQTEAEEPSNEYYTELG) lie on the Cytoplasmic side of the membrane. The chain crosses the membrane as a helical span at residues 236–256 (LYYHLLAQIPIFFFTAVVMLV). Residues 257 to 343 (TYYKILQALN…ERQKRVFRMS (87 aa)) are Extracellular-facing. Residues 276–286 (VPKKKPRKKKT) show a composition bias toward basic residues. Residues 276–309 (VPKKKPRKKKTISMTSTQPESTDASQSSAGRNAP) are disordered. The segment covering 287–305 (ISMTSTQPESTDASQSSAG) has biased composition (polar residues). A helical membrane pass occupies residues 344–364 (LLIISTFLLCWTPITVLNTVI). The Cytoplasmic portion of the chain corresponds to 365–377 (LSVGPSNFTVRLR). A helical membrane pass occupies residues 378–398 (LGFLVMAYGTTIFHPLLYAFT). Over 399 to 460 (RQKFQKVLKS…QKCLSSEDVE (62 aa)) the chain is Extracellular.

The protein belongs to the G-protein coupled receptor 1 family.

It is found in the cell membrane. Its function is as follows. Orphan G-protein coupled receptor that regulates cilia length and structure in the Kupffer's vesicle leading to the left-right asymmetry development by establishing a directional fluid flow. The sequence is that of G-protein coupled receptor 22 (gpr22a) from Danio rerio (Zebrafish).